A 397-amino-acid chain; its full sequence is uncharacterized protein (397 aa).

4 helical membrane passes run 142–162 (WETIGTFTVSGLLVAVSVGIA), 191–211 (SQLLFEHPFMALGLIFGSVVL), 242–258 (ALTGMVSLLALSGTYFL), and 260–280 (APWLDPFFGCLVSIVVFSAGF).

It belongs to the cation diffusion facilitator (CDF) transporter (TC 2.A.4) family. SLC30A subfamily.

Its subcellular location is the membrane. This is an uncharacterized protein from Schizosaccharomyces pombe (strain 972 / ATCC 24843) (Fission yeast).